The following is a 312-amino-acid chain: MANRTVKDAHSVHGTNPQYLVEKIIRTRIYESKYWKEECFGLTAELVVDKAMELKYVGGVYGGNIKPTPFLCLTLKMLQIQPEKDIIVEFIKNEDFKYVRTLGALYMRLTGTATDCYKYLEPLYNDYRKVKVQNRNGEFELMHVDEFIDQLLHEERVCDVILPRLQKRFVLEETEQLDPRVSALEEDMDDVESSEEEEDEDEKGRDPSPEHHRRNYRDLDRPRRSPSPRYRRSRSRSPRRRSRSPKRRSPSPPRRERHRSKSPRRHRSRSRERRHRSKSKSPGHHRSHRHRSHSKSPERSKKSHKKSRRGNE.

Residues 1-179 (MANRTVKDAH…VLEETEQLDP (179 aa)) form an N-terminal protein interaction domain region. The disordered stretch occupies residues 180 to 312 (RVSALEEDMD…SHKKSRRGNE (133 aa)). Over residues 184-201 (LEEDMDDVESSEEEEDED) the composition is skewed to acidic residues. The span at 202–223 (EKGRDPSPEHHRRNYRDLDRPR) shows a compositional bias: basic and acidic residues. 2 stretches are compositionally biased toward basic residues: residues 224 to 294 (RSPS…RSHS) and 301 to 312 (KKSHKKSRRGNE).

This sequence belongs to the PRP38 family. As to quaternary structure, component of the spliceosome B complex.

It localises to the nucleus. Involved in pre-mRNA splicing as a component of the spliceosome. This chain is Pre-mRNA-splicing factor 38A (prpf38a), found in Xenopus tropicalis (Western clawed frog).